The sequence spans 314 residues: UPF0761 membrane protein VP0125 (314 aa).

6 helical membrane passes run 41 to 61 (YLAY…LSIL), 104 to 124 (MSAV…SNID), 139 to 159 (LVFS…LVGA), 185 to 205 (FLRW…YILV), 217 to 237 (VGAA…ALYI), and 249 to 269 (ALAA…IVLL). The disordered stretch occupies residues 295–314 (ESQLANEGSESSDSANSTSQ).

The protein belongs to the UPF0761 family.

It is found in the cell inner membrane. The sequence is that of UPF0761 membrane protein VP0125 from Vibrio parahaemolyticus serotype O3:K6 (strain RIMD 2210633).